The sequence spans 135 residues: Large ribosomal subunit protein eL32 (135 aa).

Residues 51–77 (GRDNKFRLKMKGKPRPPEPGYRSPRKV) form a disordered region.

This sequence belongs to the eukaryotic ribosomal protein eL32 family.

This chain is Large ribosomal subunit protein eL32 (rpl32e), found in Nanoarchaeum equitans (strain Kin4-M).